The following is a 546-amino-acid chain: Membrane protein insertase YidC (546 aa).

The chain crosses the membrane as a helical span at residues 6-26; that stretch reads LILFIVFSFSLLLLWEAWQDK. Positions 31–56 are disordered; that stretch reads PATRPVAGAPAGSAAPTPSTALNAPA. Residues 37 to 56 are compositionally biased toward low complexity; it reads AGAPAGSAAPTPSTALNAPA. Helical transmembrane passes span 351–371, 425–445, 465–482, and 494–514; these read LVGN…LALY, LPIL…LAAV, WYIL…QVKL, and IMMI…AGLV.

Belongs to the OXA1/ALB3/YidC family. Type 1 subfamily. Interacts with the Sec translocase complex via SecD. Specifically interacts with transmembrane segments of nascent integral membrane proteins during membrane integration.

It is found in the cell inner membrane. In terms of biological role, required for the insertion and/or proper folding and/or complex formation of integral membrane proteins into the membrane. Involved in integration of membrane proteins that insert both dependently and independently of the Sec translocase complex, as well as at least some lipoproteins. Aids folding of multispanning membrane proteins. This chain is Membrane protein insertase YidC, found in Thiobacillus denitrificans (strain ATCC 25259 / T1).